Here is a 32-residue protein sequence, read N- to C-terminus: uncharacterized protein (32 aa).

This is an uncharacterized protein from Treponema pallidum (strain Nichols).